The following is a 94-amino-acid chain: YcgL domain-containing protein VP0875 (94 aa).

A YcgL domain is found at 1 to 84; that stretch reads MLCSIYKSSK…PPENLLEKYK (84 aa).

The polypeptide is YcgL domain-containing protein VP0875 (Vibrio parahaemolyticus serotype O3:K6 (strain RIMD 2210633)).